We begin with the raw amino-acid sequence, 1704 residues long: Phospholipid-transporting ATPase ABCA3 (1704 aa).

N-linked (GlcNAc...) asparagine glycosylation occurs at Asn14. Residues 22 to 42 form a helical membrane-spanning segment; it reads VLVTVLELFLPLLFSGILIWL. Asn53, Asn124, Asn140, and Asn228 each carry an N-linked (GlcNAc...) asparagine glycan. The next 6 membrane-spanning stretches (helical) occupy residues 261–283, 307–327, 344–364, 373–393, 405–425, and 447–467; these read YQLP…RAVV, AWFL…TLLF, SLVL…SFMV, IAAA…FFVA, LLSC…IGKF, and FCFG…GLVT. The 234-residue stretch at 530 to 763 folds into the ABC transporter 1 domain; that stretch reads IKIKHLSKVF…YGAGYHMTLV (234 aa). Position 566–573 (566–573) interacts with ATP; that stretch reads GHNGAGKT. A glycan (N-linked (GlcNAc...) asparagine) is linked at Asn620. 7 helical membrane passes run 925–945, 1100–1120, 1144–1164, 1183–1203, 1213–1233, 1245–1265, and 1310–1330; these read MVAA…LAIH, IALN…ILAV, SALL…LVVF, LLLM…SFFF, LTIF…IMRI, LDHV…SNFY, and MAAS…NLLW. An N-linked (GlcNAc...) asparagine glycan is attached at Asn1350. Residues 1381–1614 form the ABC transporter 2 domain; the sequence is LIINELSKVY…FGSGYSLQAK (234 aa). 1416–1423 is an ATP binding site; the sequence is GFNGAGKT.

The protein belongs to the ABC transporter superfamily. ABCA family. As to quaternary structure, homooligomer; disulfide-linked. N-glycosylated. Localization at intracellular vesicles is accompanied by processing of oligosaccharide from high mannose type to complex type. N-linked glycosylation at Asn-124 and Asn-140 is required for stability and efficient anterograde trafficking and prevents from proteasomal degradation. Post-translationally, proteolytically cleaved by CTSL and to a lower extent by CTSB within multivesicular bodies (MVB) and lamellar bodies (LB) leading to a mature form of 150 kDa. As to expression, highly expressed in the lung and moderately expressed in the kidney, adipose, macrophage, and spleen.

Its subcellular location is the endosome. It is found in the multivesicular body membrane. The protein resides in the cytoplasmic vesicle membrane. The protein localises to the late endosome membrane. It localises to the lysosome membrane. The catalysed reaction is a 1,2-diacyl-sn-glycero-3-phospho-(1'-sn-glycerol)(in) + ATP + H2O = a 1,2-diacyl-sn-glycero-3-phospho-(1'-sn-glycerol)(out) + ADP + phosphate + H(+). It carries out the reaction a 1,2-diacyl-sn-glycero-3-phosphocholine(in) + ATP + H2O = a 1,2-diacyl-sn-glycero-3-phosphocholine(out) + ADP + phosphate + H(+). The enzyme catalyses ATP + H2O + phospholipidSide 1 = ADP + phosphate + phospholipidSide 2.. It catalyses the reaction ATP + H2O + xenobioticSide 1 = ADP + phosphate + xenobioticSide 2.. The catalysed reaction is 1,2-dihexadecanoyl-sn-glycero-3-phosphocholine(in) + ATP + H2O = 1,2-dihexadecanoyl-sn-glycero-3-phosphocholine(out) + ADP + phosphate + H(+). It carries out the reaction cholesterol(in) + ATP + H2O = cholesterol(out) + ADP + phosphate + H(+). Its function is as follows. Catalyzes the ATP-dependent transport of phospholipids such as phosphatidylcholine and phosphoglycerol from the cytoplasm into the lumen side of lamellar bodies, in turn participates in the lamellar bodies biogenesis and homeostasis of pulmonary surfactant. Transports preferentially phosphatidylcholine containing short acyl chains. In addition plays a role as an efflux transporter of miltefosine across macrophage membranes and free cholesterol (FC) through intralumenal vesicles by removing FC from the cell as a component of surfactant and protects cells from free cholesterol toxicity. The protein is Phospholipid-transporting ATPase ABCA3 (Abca3) of Mus musculus (Mouse).